The primary structure comprises 361 residues: Collagenase (361 aa).

It belongs to the peptidase U32 family. As to quaternary structure, homodimer. It depends on a metal cation as a cofactor.

Activity somewhat enhanced by calcium ions, inhibited by zinc and Fe(3+) ions and by p-chloromercuribenzoic acid and EDTA. Activity is enhanced by salivary peptide cystatin and reduced by salivary peptide histatin. Has collagenase activity. Active on soluble collagen, reconstituted type I collagen, heat denatured type I collagen and azocoll, but not gelatin or the synthetic bacterial collagenase substrate PZ-PLGPA. May play a role in virulence. In Porphyromonas gingivalis (Bacteroides gingivalis), this protein is Collagenase.